The primary structure comprises 633 residues: Extracellular metalloproteinase 5 (633 aa).

A signal peptide spans 1 to 21 (MHGLLLAAAGLLSLPLHVIAH). Residues 22–245 (PQPSTNLAGR…HNVVDYVSHA (224 aa)) constitute a propeptide that is removed on maturation. An N-linked (GlcNAc...) asparagine glycan is attached at asparagine 286. Zn(2+) is bound at residue histidine 428. The active site involves glutamate 429. Residue histidine 432 participates in Zn(2+) binding. 2 N-linked (GlcNAc...) asparagine glycosylation sites follow: asparagine 592 and asparagine 621.

Belongs to the peptidase M36 family. Zn(2+) is required as a cofactor.

Its subcellular location is the secreted. In terms of biological role, secreted metalloproteinase probably acting as a virulence factor. This Arthroderma benhamiae (Trichophyton mentagrophytes) protein is Extracellular metalloproteinase 5 (MEP5).